The chain runs to 347 residues: NADH-ubiquinone oxidoreductase chain 2 (347 aa).

10 helical membrane passes run 13-33 (IVLG…WMGF), 59-79 (YFLT…INLV), 96-116 (IIMT…FWVP), 122-142 (ISLL…LSVL), 144-164 (VISP…SILI), 178-200 (ILAY…NPMM), 210-232 (LMTA…ALSH), 246-266 (IIML…KWMI), 276-296 (IILA…YMRL), and 326-346 (LPML…MILL).

The protein belongs to the complex I subunit 2 family. Core subunit of respiratory chain NADH dehydrogenase (Complex I) which is composed of 45 different subunits. Interacts with TMEM242.

The protein localises to the mitochondrion inner membrane. It catalyses the reaction a ubiquinone + NADH + 5 H(+)(in) = a ubiquinol + NAD(+) + 4 H(+)(out). Functionally, core subunit of the mitochondrial membrane respiratory chain NADH dehydrogenase (Complex I) which catalyzes electron transfer from NADH through the respiratory chain, using ubiquinone as an electron acceptor. Essential for the catalytic activity and assembly of complex I. This Rhynchonycteris naso (Brazilian long-nosed bat) protein is NADH-ubiquinone oxidoreductase chain 2.